Reading from the N-terminus, the 55-residue chain is MNSEKIIEVIIAIFLPPVAVFMKCGATTPLWINLVLCIFIWFPAILHALYVVLKD.

2 helical membrane-spanning segments follow: residues 3–23 (SEKI…VFMK) and 31–51 (WINL…ALYV).

The protein belongs to the UPF0057 (PMP3) family.

The protein resides in the membrane. Plays a role in the regulation of membrane potential. The protein is Plasma membrane proteolipid 3 homolog (PMP3) of Candida albicans (Yeast).